The chain runs to 487 residues: Probable cytochrome P450 513B1 (487 aa).

Residues 1 to 18 (MNLLVLSVILAIIIYLIF) traverse the membrane as a helical segment. C433 lines the heme pocket.

Belongs to the cytochrome P450 family. The cofactor is heme.

The protein localises to the membrane. This chain is Probable cytochrome P450 513B1 (cyp513B1), found in Dictyostelium discoideum (Social amoeba).